The chain runs to 365 residues: MWPLSHRHLCLAFLLVCVLSAISFFLHIYQDSIRHGLGLSILCPDRLVTAPVAIFCLPDSPMSPNTSSPCPQHPASLSGTWTIYPDGRFGNQMGQYATLLALAQLNGRRAFILPAMHATLAPVFRITLPVLAPEVDSSTPWRELQLHDWMSEEYADLGDPFLKLSGFPCSWTFFHHLREQIRSEFTLHDHLREEAQSVLRRLRLGRSGDRPRTFVGVHVRRGDYLQVMPQRWKGVVGNSAYLREAMDWFRARHEAPVFVVTSNGMEWCRENIDASKGDVMFAGDGQEASPWKDFALLTQCNHTIMTIGTFGFWAAYLAGGDTVYLANFTLPDSEFLKIFKPEAAFLPEWVGINADLSPLWTLAEP.

At 1–8 (MWPLSHRH) the chain is on the cytoplasmic side. A helical; Signal-anchor for type II membrane protein membrane pass occupies residues 9-25 (LCLAFLLVCVLSAISFF). Residues 26 to 365 (LHIYQDSIRH…LSPLWTLAEP (340 aa)) lie on the Lumenal side of the membrane. Residues Asn-65, Asn-301, and Asn-327 are each glycosylated (N-linked (GlcNAc...) asparagine).

It belongs to the glycosyltransferase 11 family.

It is found in the golgi apparatus. It localises to the golgi stack membrane. The catalysed reaction is a beta-D-galactosyl-(1-&gt;4)-N-acetyl-beta-D-glucosaminyl derivative + GDP-beta-L-fucose = an alpha-L-Fuc-(1-&gt;2)-beta-D-Gal-(1-&gt;4)-beta-D-GlcNAc derivative + GDP + H(+). The enzyme catalyses a ganglioside GA1 + GDP-beta-L-fucose = a ganglioside Fuc-GA1 + GDP + H(+). It catalyses the reaction a beta-D-Gal-(1-&gt;3)-beta-D-GlcNAc-(1-&gt;3)-beta-D-Gal-(1-&gt;4)-beta-D-Glc-(1&lt;-&gt;1')-Cer(d18:1(4E)) + GDP-beta-L-fucose = alpha-L-fucosyl-(1-&gt;2)- beta-D-galactosyl-(1-&gt;3)-N-acetyl-beta-D-glucosaminyl-(1-&gt;3)-beta-D-galactosyl-(1-&gt;4)-beta-D-glucosyl-(1&lt;-&gt;1')-N-acylsphing-4-enine + GDP + H(+). It carries out the reaction a neolactoside nLc4Cer(d18:1(4E)) + GDP-beta-L-fucose = a neolactoside IV(2)-alpha-Fuc-nLc4Cer(d18:1(4E)) + GDP + H(+). The catalysed reaction is a ganglioside GM1 + GDP-beta-L-fucose = a ganglioside Fuc-GM1 + GDP + H(+). The enzyme catalyses beta-D-galactosyl-(1-&gt;3)-N-acetyl-D-galactosamine + GDP-beta-L-fucose = alpha-L-fucosyl-(1-&gt;2)-beta-D-galactosyl-(1-&gt;3)-N-acetyl-D-galactosamine + GDP + H(+). It functions in the pathway protein modification; protein glycosylation. In terms of biological role, catalyzes the transfer of L-fucose, from a guanosine diphosphate-beta-L-fucose, to the terminal galactose residue of glycoconjugates through an alpha(1,2) linkage leading to H antigen synthesis that is an intermediate substrate in the synthesis of ABO blood group antigens. H antigen is essential for maturation of the glomerular layer of the main olfactory bulb, in cell migration and early cell-cell contacts during tumor associated angiogenesis. Preferentially fucosylates soluble lactose and to a lesser extent fucosylates glycolipids gangliosides GA1 and GM1a. The sequence is that of Galactoside alpha-(1,2)-fucosyltransferase 1 from Mico humeralifer (Black and white tassel-ear marmoset).